We begin with the raw amino-acid sequence, 233 residues long: 2-C-methyl-D-erythritol 4-phosphate cytidylyltransferase (233 aa).

Belongs to the IspD/TarI cytidylyltransferase family. IspD subfamily.

It catalyses the reaction 2-C-methyl-D-erythritol 4-phosphate + CTP + H(+) = 4-CDP-2-C-methyl-D-erythritol + diphosphate. Its pathway is isoprenoid biosynthesis; isopentenyl diphosphate biosynthesis via DXP pathway; isopentenyl diphosphate from 1-deoxy-D-xylulose 5-phosphate: step 2/6. Catalyzes the formation of 4-diphosphocytidyl-2-C-methyl-D-erythritol from CTP and 2-C-methyl-D-erythritol 4-phosphate (MEP). The protein is 2-C-methyl-D-erythritol 4-phosphate cytidylyltransferase of Nitrosomonas eutropha (strain DSM 101675 / C91 / Nm57).